The sequence spans 353 residues: Photosystem II protein D1 (353 aa).

Thr-2 is modified (N-acetylthreonine). At Thr-2 the chain carries Phosphothreonine. The next 3 membrane-spanning stretches (helical) occupy residues 29-46 (YIGW…TATS), 118-133 (HFLL…EWEL), and 142-156 (WIAV…AATA). A chlorophyll a-binding site is contributed by His-118. Tyr-126 provides a ligand contact to pheophytin a. [CaMn4O5] cluster contacts are provided by Asp-170 and Glu-189. Residues 197 to 218 (FHMLGVAGVFGGSLFSAMHGSL) form a helical membrane-spanning segment. Residue His-198 participates in chlorophyll a binding. Residues His-215 and 264-265 (SF) each bind a quinone. His-215 provides a ligand contact to Fe cation. His-272 provides a ligand contact to Fe cation. A helical membrane pass occupies residues 274 to 288 (FLAAWPVAGIWFTAL). [CaMn4O5] cluster is bound by residues His-332, Glu-333, Asp-342, and Ala-344. Positions 345–353 (AVESISIGG) are excised as a propeptide.

This sequence belongs to the reaction center PufL/M/PsbA/D family. In terms of assembly, PSII is composed of 1 copy each of membrane proteins PsbA, PsbB, PsbC, PsbD, PsbE, PsbF, PsbH, PsbI, PsbJ, PsbK, PsbL, PsbM, PsbT, PsbX, PsbY, PsbZ, Psb30/Ycf12, at least 3 peripheral proteins of the oxygen-evolving complex and a large number of cofactors. It forms dimeric complexes. Requires The D1/D2 heterodimer binds P680, chlorophylls that are the primary electron donor of PSII, and subsequent electron acceptors. It shares a non-heme iron and each subunit binds pheophytin, quinone, additional chlorophylls, carotenoids and lipids. D1 provides most of the ligands for the Mn4-Ca-O5 cluster of the oxygen-evolving complex (OEC). There is also a Cl(-1) ion associated with D1 and D2, which is required for oxygen evolution. The PSII complex binds additional chlorophylls, carotenoids and specific lipids. as cofactor. Tyr-161 forms a radical intermediate that is referred to as redox-active TyrZ, YZ or Y-Z. In terms of processing, C-terminally processed by CTPA; processing is essential to allow assembly of the oxygen-evolving complex and thus photosynthetic growth.

It is found in the plastid. Its subcellular location is the chloroplast thylakoid membrane. The catalysed reaction is 2 a plastoquinone + 4 hnu + 2 H2O = 2 a plastoquinol + O2. Its function is as follows. Photosystem II (PSII) is a light-driven water:plastoquinone oxidoreductase that uses light energy to abstract electrons from H(2)O, generating O(2) and a proton gradient subsequently used for ATP formation. It consists of a core antenna complex that captures photons, and an electron transfer chain that converts photonic excitation into a charge separation. The D1/D2 (PsbA/PsbD) reaction center heterodimer binds P680, the primary electron donor of PSII as well as several subsequent electron acceptors. The chain is Photosystem II protein D1 from Pinus koraiensis (Korean pine).